The primary structure comprises 522 residues: uncharacterized protein (522 aa).

Over residues 1–11 (MSSITSRVSSR) the composition is skewed to low complexity. The interval 1–20 (MSSITSRVSSRSSHELTEKK) is disordered. 12 consecutive transmembrane segments (helical) span residues 69-89 (VLWK…MIQY), 116-136 (SMTT…AILM), 141-161 (LSYF…LMAA), 173-193 (FLAG…TAMW), 204-224 (LCWY…SYGL), 236-256 (YVFI…VFIP), 303-323 (VIMI…GVFS), 338-358 (AVLN…SGVL), 367-387 (LLIG…IWKI), 396-416 (LVGV…LSLI), 428-448 (VTSA…PQLF), and 462-482 (AMIV…GYYI).

This sequence belongs to the major facilitator superfamily. Allantoate permease family.

It is found in the endoplasmic reticulum. The protein localises to the membrane. This is an uncharacterized protein from Schizosaccharomyces pombe (strain 972 / ATCC 24843) (Fission yeast).